The primary structure comprises 760 residues: Xaa-Pro dipeptidyl-peptidase (760 aa).

Active-site charge relay system residues include serine 349, aspartate 469, and histidine 499.

Belongs to the peptidase S15 family. Homodimer.

The protein resides in the cytoplasm. The enzyme catalyses Hydrolyzes Xaa-Pro-|- bonds to release unblocked, N-terminal dipeptides from substrates including Ala-Pro-|-p-nitroanilide and (sequentially) Tyr-Pro-|-Phe-Pro-|-Gly-Pro-|-Ile.. In terms of biological role, removes N-terminal dipeptides sequentially from polypeptides having unsubstituted N-termini provided that the penultimate residue is proline. The protein is Xaa-Pro dipeptidyl-peptidase of Streptococcus pyogenes serotype M1.